We begin with the raw amino-acid sequence, 292 residues long: MNNHFKCIGIVGHPRHPTALTTHEMLYRWLCAKGYEVIVEQQIAHELQLKNVKTGTLAEIGQLADLAVVVGGDGNMLGAARTLARYDIKVIGINRGNLGFLTDLDPDNAQQQLADVLEGHYIIEKRFLLEAQVCQQDCQKRISTAINEVVLHPGKVAHMIEFEVYIDEIFAFSQRSDGLIISTPTGSTAYSLSAGGPILTPSLDAITLVPMFPHTLSARPLVINSSSTIRLRFSHRRNDLEISCDSQIALPIQEGEDVLIRRCDYHLNLIHPKDYSYFNTLSTKLGWSKKLF.

Asp-73 acts as the Proton acceptor in catalysis. Residues Asp-73–Gly-74, Asn-147–Glu-148, His-158, Arg-175, Asp-177, Thr-188–Ser-193, and Gln-247 each bind NAD(+).

It belongs to the NAD kinase family. A divalent metal cation serves as cofactor.

It is found in the cytoplasm. The enzyme catalyses NAD(+) + ATP = ADP + NADP(+) + H(+). Its function is as follows. Involved in the regulation of the intracellular balance of NAD and NADP, and is a key enzyme in the biosynthesis of NADP. Catalyzes specifically the phosphorylation on 2'-hydroxyl of the adenosine moiety of NAD to yield NADP. The protein is NAD kinase of Escherichia coli O7:K1 (strain IAI39 / ExPEC).